The following is a 247-amino-acid chain: Probable transcriptional regulatory protein DVU_2259 (247 aa).

Positions 1 to 22 (MAGHSKWANIQHRKGRQDAKRG) are disordered.

The protein belongs to the TACO1 family.

It is found in the cytoplasm. The polypeptide is Probable transcriptional regulatory protein DVU_2259 (Nitratidesulfovibrio vulgaris (strain ATCC 29579 / DSM 644 / CCUG 34227 / NCIMB 8303 / VKM B-1760 / Hildenborough) (Desulfovibrio vulgaris)).